Here is an 81-residue protein sequence, read N- to C-terminus: Cytotoxin 3d (81 aa).

An N-terminal signal peptide occupies residues 1–21; the sequence is MKTLLLTLVVVTIVCLDLGYT. Intrachain disulfides connect Cys24-Cys42, Cys35-Cys59, Cys63-Cys74, and Cys75-Cys80.

Belongs to the three-finger toxin family. Short-chain subfamily. Type IA cytotoxin sub-subfamily. In terms of assembly, monomer in solution; Homodimer and oligomer in the presence of negatively charged lipids forming a pore with a size ranging between 20 and 30 Angstroms. In terms of tissue distribution, expressed by the venom gland.

It localises to the secreted. It is found in the target cell membrane. In terms of biological role, shows cytolytic activity on many different cells by forming pore in lipid membranes. In vivo, increases heart rate or kills the animal by cardiac arrest. In addition, it binds to heparin with high affinity, interacts with Kv channel-interacting protein 1 (KCNIP1) in a calcium-independent manner, and binds to integrin alpha-V/beta-3 (ITGAV/ITGB3) with moderate affinity. The polypeptide is Cytotoxin 3d (Naja atra (Chinese cobra)).